The following is a 332-amino-acid chain: Cyclin-dependent kinase 1 (332 aa).

The 291-residue stretch at 22-312 folds into the Protein kinase domain; it reads FTKLEKIGEG…AKKALVHPYF (291 aa). Residues 28–36 and Lys51 contribute to the ATP site; that span reads IGEGTYGVV. Thr32 is subject to Phosphothreonine. Tyr33 is subject to Phosphotyrosine. Asp146 acts as the Proton acceptor in catalysis.

It belongs to the protein kinase superfamily. CMGC Ser/Thr protein kinase family. CDC2/CDKX subfamily. Forms a stable but non-covalent complex with a regulatory subunit and with a cyclin. Interacts with cks-1. In terms of processing, phosphorylated.

The protein resides in the nucleus. The protein localises to the cytoplasm. Its subcellular location is the cytoskeleton. It localises to the microtubule organizing center. It is found in the centrosome. The protein resides in the chromosome. It catalyses the reaction L-seryl-[protein] + ATP = O-phospho-L-seryl-[protein] + ADP + H(+). The enzyme catalyses L-threonyl-[protein] + ATP = O-phospho-L-threonyl-[protein] + ADP + H(+). The catalysed reaction is [DNA-directed RNA polymerase] + ATP = phospho-[DNA-directed RNA polymerase] + ADP + H(+). Its activity is regulated as follows. Phosphorylation both activates and inactivates the enzyme depending on the site of phosphorylation. In terms of biological role, plays a key role in the control of the eukaryotic cell cycle. Required for entry into S-phase and mitosis. Acts as a component of the kinase complex that phosphorylates the repetitive C-terminus of RNA polymerase II. May function in concert with npp-16 to arrest prophase blastomeres in response to anoxia. The sequence is that of Cyclin-dependent kinase 1 (cdk-1) from Caenorhabditis elegans.